Consider the following 250-residue polypeptide: Precorrin-4 C(11)-methyltransferase (250 aa).

It belongs to the precorrin methyltransferase family.

The enzyme catalyses precorrin-4 + S-adenosyl-L-methionine = precorrin-5 + S-adenosyl-L-homocysteine. It participates in cofactor biosynthesis; adenosylcobalamin biosynthesis; cob(II)yrinate a,c-diamide from precorrin-2 (aerobic route): step 4/10. In terms of biological role, catalyzes the methylation of C-11 in precorrin-4 to form precorrin-5. This Pseudomonas aeruginosa (strain ATCC 15692 / DSM 22644 / CIP 104116 / JCM 14847 / LMG 12228 / 1C / PRS 101 / PAO1) protein is Precorrin-4 C(11)-methyltransferase (cobM).